Reading from the N-terminus, the 307-residue chain is Type 2A encapsulin shell protein (307 aa).

This sequence belongs to the encapsulin family. Family 2A subfamily. The encapsulin nanocompartment is formed by 60 subunits; monomers form pentamers which assemble to form shells. There are 12 charged pores where the pentamers meet as well as 3-fold axis channels and dimer channels. Isolated from bacteria in a complex with cysteine desulfurase (AC Q9KII6).

The protein resides in the encapsulin nanocompartment. It is found in the cell membrane. Shell component of a type 2A encapsulin nanocompartment. Forms encapsulin nanocompartments about 24 nm in diameter from 60 monomers, probably involved in sulfur metabolism. Probably encapsulates cysteine desulfurase. In Mycolicibacterium paratuberculosis (strain ATCC BAA-968 / K-10) (Mycobacterium paratuberculosis), this protein is Type 2A encapsulin shell protein.